Consider the following 1050-residue polypeptide: Beta-galactosidase (1050 aa).

Asn-110 and Asp-209 together coordinate substrate. Position 209 (Asp-209) interacts with Na(+). Mg(2+) is bound by residues Glu-432, His-434, and Glu-477. Substrate contacts are provided by residues Glu-477 and 553 to 556; that span reads EYAH. The Proton donor role is filled by Glu-477. Residue Glu-553 is the Nucleophile of the active site. Asn-613 is a Mg(2+) binding site. Phe-617 and Asn-620 together coordinate Na(+). 2 residues coordinate substrate: Asn-620 and Trp-1023.

The protein belongs to the glycosyl hydrolase 2 family. In terms of assembly, homotetramer. Requires Mg(2+) as cofactor. It depends on Na(+) as a cofactor.

It carries out the reaction Hydrolysis of terminal non-reducing beta-D-galactose residues in beta-D-galactosides.. This is Beta-galactosidase from Yersinia enterocolitica serotype O:8 / biotype 1B (strain NCTC 13174 / 8081).